The chain runs to 284 residues: Acetylglutamate kinase (284 aa).

Substrate is bound by residues 66-67, Arg88, and Asn179; that span reads GG.

It belongs to the acetylglutamate kinase family. ArgB subfamily.

It is found in the cytoplasm. It carries out the reaction N-acetyl-L-glutamate + ATP = N-acetyl-L-glutamyl 5-phosphate + ADP. It participates in amino-acid biosynthesis; L-arginine biosynthesis; N(2)-acetyl-L-ornithine from L-glutamate: step 2/4. Catalyzes the ATP-dependent phosphorylation of N-acetyl-L-glutamate. This is Acetylglutamate kinase from Actinobacillus pleuropneumoniae serotype 5b (strain L20).